We begin with the raw amino-acid sequence, 1504 residues long: DNA-directed RNA polymerase subunit beta' (1504 aa).

The Zn(2+) site is built by cysteine 60, cysteine 62, cysteine 75, and cysteine 78. The interval 265–294 (RKQRDLEDAEQLTGAERERKEYEASQERER) is disordered. Residues 279 to 294 (AERERKEYEASQERER) are compositionally biased toward basic and acidic residues. The Mg(2+) site is built by aspartate 626, aspartate 628, and aspartate 630. The Zn(2+) site is built by cysteine 1002, cysteine 1075, cysteine 1082, and cysteine 1085. The tract at residues 1468 to 1504 (RALIGGDGDDGERNNGDFDDQVGEDVVIPPDDDDQEA) is disordered.

The protein belongs to the RNA polymerase beta' chain family. The RNAP catalytic core consists of 2 alpha, 1 beta, 1 beta' and 1 omega subunit. When a sigma factor is associated with the core the holoenzyme is formed, which can initiate transcription. Mg(2+) serves as cofactor. Zn(2+) is required as a cofactor.

The catalysed reaction is RNA(n) + a ribonucleoside 5'-triphosphate = RNA(n+1) + diphosphate. DNA-dependent RNA polymerase catalyzes the transcription of DNA into RNA using the four ribonucleoside triphosphates as substrates. In Roseiflexus sp. (strain RS-1), this protein is DNA-directed RNA polymerase subunit beta'.